The following is a 242-amino-acid chain: DNA repair protein RecO (242 aa).

It belongs to the RecO family. In terms of assembly, monomer.

Functionally, involved in DNA repair and RecF pathway recombination. In Salmonella dublin (strain CT_02021853), this protein is DNA repair protein RecO.